Reading from the N-terminus, the 504-residue chain is MEFKQPNRPSYCTWELNATNSPHTCRTKNGDYTKIMPDILTAIGQTPLIKLNNIPKSYGIKCEIYAKCEFLNPGGSVKDRIAYRMIQDAEDKGLLKPGCTIIEPTSGNTGIGLAMAAAVRGYKCIIVMPEKMSDEKISTLYALGAKIIRTPTEASWHSPEAHISVAQKLQKEIPNSIILDQYTNPGNPLAHYDQTAIEIWKQCEGKIDYLVAGAGTGGTISGIGRKLKELSPNIKIIAVDPKGSILDPSSDSQNEVGFYEVEGIGYDFIPTVLDRNVIDKWIKTEDNESLNAARMLIRQEGLLCGGSSGAALIAALKIAKDIPEEKRMVIILPDGIRNYLTKFVSEYWMETRGFLQPVCQNEMNKWWWNMKISNLSFDKQSLLKENTVTCQEAMHMLKNADSQLLVISDDNIHIKGVISLNKLTSYVISGIVKCTDFVDKAMVKQYVKVKHSATLGYISRVLEKEPYVIILDDEHDDAFIGIVNQFHILQFITKNGTSNNYLIN.

Heme is bound by residues Cys-12 and His-23. Lys-78 is subject to N6-(pyridoxal phosphate)lysine. Pyridoxal 5'-phosphate contacts are provided by residues Asn-108, 215 to 219 (GTGGT), and Ser-307. CBS domains lie at 375–434 (LSFD…IVKC) and 442–498 (MVKQ…NGTS).

Belongs to the cysteine synthase/cystathionine beta-synthase family. Homodimer. The cofactor is pyridoxal 5'-phosphate.

It catalyses the reaction L-homocysteine + L-serine = L,L-cystathionine + H2O. Its pathway is amino-acid biosynthesis; L-cysteine biosynthesis; L-cysteine from L-homocysteine and L-serine: step 1/2. Its activity is regulated as follows. Has no response to S-adenosyl-methionine/AdoMet, unlike mammalian orthologs. Binds non-covalently to a heme group that may control the redox sensitivity of the enzyme. Functionally, hydro-lyase catalyzing the first step of the transsulfuration pathway, where the hydroxyl group of L-serine is displaced by L-homocysteine in a beta-replacement reaction to form L-cystathionine, the precursor of L-cysteine. In Apis mellifera (Honeybee), this protein is Cystathionine beta-synthase.